The primary structure comprises 169 residues: Signal peptidase complex subunit 1 (169 aa).

The Cytoplasmic segment spans residues 1–93; the sequence is MARGGDTGCT…QKLAEQMFQG (93 aa). The (Microbial infection) Interaction with JEV NS2B stretch occupies residues 91 to 169; that stretch reads FQGIILFSAI…RKIKRHAKNN (79 aa). The helical transmembrane segment at 94–114 threads the bilayer; that stretch reads IILFSAIVGFIYGYVAEQFGW. The interval 110–169 is (Microbial infection) Interaction with HCV NS2 and HCV E2; the sequence is EQFGWTVYIVMAGFAFSCLLTLPPWPIYRRHPLKWLPVQESSTDDKKPGERKIKRHAKNN. Residue T115 is a topological domain, lumenal. Residues 116 to 136 form a helical membrane-spanning segment; sequence VYIVMAGFAFSCLLTLPPWPI. Topologically, residues 137-169 are cytoplasmic; sequence YRRHPLKWLPVQESSTDDKKPGERKIKRHAKNN. Positions 148–169 are disordered; the sequence is QESSTDDKKPGERKIKRHAKNN.

This sequence belongs to the SPCS1 family. In terms of assembly, component of the signal peptidase complex paralog A (SPC-A) composed of a catalytic subunit SEC11A and three accessory subunits SPCS1, SPCS2 and SPCS3. Component of the signal peptidase complex paralog C (SPC-C) composed of a catalytic subunit SEC11C and three accessory subunits SPCS1, SPCS2 and SPCS3. Within the complex, interacts with SPCS2 and SPCS3. The complex induces a local thinning of the ER membrane which is used to measure the length of the signal peptide (SP) h-region of protein substrates. This ensures the selectivity of the complex towards h-regions shorter than 18-20 amino acids. As to quaternary structure, (Microbial infection) Interacts with hepatitis C virus (HCV) proteins NS2 and E2. Interacts with NS2B from Japanese encephalitis virus (JEV), West Nile virus (WNV), and Zika virus (ZIKV). Post-translationally, may be phosphorylated.

The protein localises to the endoplasmic reticulum membrane. Functionally, component of the signal peptidase complex (SPC) which catalyzes the cleavage of N-terminal signal sequences from nascent proteins as they are translocated into the lumen of the endoplasmic reticulum. Dispensable for SPC enzymatic activity. (Microbial infection) Required for the post-translational processing of proteins involved in virion assembly and secretion from flaviviruses such as West Nile virus (WNV), Japanese encephalitis virus (JEV), Dengue virus type 2 (DENV-2), Yellow Fever virus (YFV), Zika virus (ZIKV) and hepatitis C virus (HCV). Plays a key role in the post-translational processing of flaviviral structural proteins prM, E, and NS1. In HCV, it is involved in virion assembly where it promotes the interaction between HCV virus proteins NS2 and E2. In Homo sapiens (Human), this protein is Signal peptidase complex subunit 1 (SPCS1).